The sequence spans 68 residues: Galectin-10 (68 aa).

A Galectin domain is found at 1–68; the sequence is EPYLQVDFHT…LSISVLPDKY (68 aa).

Interacts with CEL.

The protein resides in the cytoplasm. It is found in the cytosol. The protein localises to the cytoplasmic granule. In terms of biological role, regulates immune responses through the recognition of cell-surface glycans. Essential for the anergy and suppressive function of CD25-positive regulatory T-cells (Treg). The chain is Galectin-10 (CLC) from Pongo pygmaeus (Bornean orangutan).